The following is a 314-amino-acid chain: Vacuolar membrane protein VL3_4134 (314 aa).

The tract at residues K32–A60 is disordered. Residues V93 to L113 traverse the membrane as a helical segment. 3 positions are modified to phosphoserine: S148, S254, and S274. The interval E240–N309 is disordered. Positions S254–H269 are enriched in basic and acidic residues.

Belongs to the PRM5 family.

The protein localises to the vacuole membrane. The polypeptide is Vacuolar membrane protein VL3_4134 (Saccharomyces cerevisiae (strain Zymaflore VL3) (Baker's yeast)).